The primary structure comprises 341 residues: L-threonine 3-dehydrogenase (341 aa).

Position 38 (C38) interacts with Zn(2+). Catalysis depends on charge relay system residues T40 and H43. 6 residues coordinate Zn(2+): H63, E64, C93, C96, C99, and C107. NAD(+)-binding positions include I175, D195, R200, 262–264, and 286–287; these read LGI and IY.

This sequence belongs to the zinc-containing alcohol dehydrogenase family. Homotetramer. Zn(2+) is required as a cofactor.

The protein localises to the cytoplasm. It catalyses the reaction L-threonine + NAD(+) = (2S)-2-amino-3-oxobutanoate + NADH + H(+). Its pathway is amino-acid degradation; L-threonine degradation via oxydo-reductase pathway; glycine from L-threonine: step 1/2. In terms of biological role, catalyzes the NAD(+)-dependent oxidation of L-threonine to 2-amino-3-ketobutyrate. The chain is L-threonine 3-dehydrogenase from Shigella sonnei (strain Ss046).